The chain runs to 209 residues: UPF0319 protein VFMJ11_1730 (209 aa).

The signal sequence occupies residues 1-21; it reads MKIQSIFAASFCLLSSISAHA.

Belongs to the UPF0319 family.

The polypeptide is UPF0319 protein VFMJ11_1730 (Aliivibrio fischeri (strain MJ11) (Vibrio fischeri)).